A 541-amino-acid chain; its full sequence is Membrane protein insertase YidC (541 aa).

6 helical membrane passes run 6-26 (NILL…WQAD), 325-345 (LVVD…LLMF), 349-369 (FVGN…GLLF), 420-440 (GGCL…WVLL), 457-477 (LSVQ…MFVM), and 500-520 (VIFT…WLVG).

This sequence belongs to the OXA1/ALB3/YidC family. Type 1 subfamily. As to quaternary structure, interacts with the Sec translocase complex via SecD. Specifically interacts with transmembrane segments of nascent integral membrane proteins during membrane integration.

Its subcellular location is the cell inner membrane. Its function is as follows. Required for the insertion and/or proper folding and/or complex formation of integral membrane proteins into the membrane. Involved in integration of membrane proteins that insert both dependently and independently of the Sec translocase complex, as well as at least some lipoproteins. Aids folding of multispanning membrane proteins. The protein is Membrane protein insertase YidC of Shewanella baltica (strain OS195).